The sequence spans 279 residues: Calcium-binding protein 4 (279 aa).

Residues 1–12 are compositionally biased toward basic and acidic residues; it reads MAEEQGRGRHGP. Residues 1–114 are disordered; the sequence is MAEEQGRGRH…PGPQHDAAQR (114 aa). At S42 the chain carries Phosphoserine. The segment covering 55 to 65 has biased composition (polar residues); that stretch reads GPSSSGEQTPM. 4 EF-hand domains span residues 133 to 168, 187 to 204, 210 to 245, and 247 to 279; these read EELD…LGYM, GRVD…KLRE, LGLR…LLGE, and LVGP…LSRH. Ca(2+) contacts are provided by D146, D148, D150, Y152, and D157. D223, D225, D227, R229, E234, D260, N262, D264, T266, and E271 together coordinate Ca(2+).

As to quaternary structure, interacts with CACNA1F and CACNA1D (via IQ domain) in a calcium independent manner. Interacts (via N-terminus) with UNC119. Post-translationally, phosphorylated. Phosphorylation levels change with the light conditions and regulate the activity. Expressed in the retina.

The protein localises to the cytoplasm. The protein resides in the presynapse. May play a role in normal synaptic function, probably through regulation of Ca(2+) influx and neurotransmitter release in photoreceptor synaptic terminals and in auditory transmission. Modulator of CACNA1F, shifting the activation range to more hyperpolarized voltages. The polypeptide is Calcium-binding protein 4 (CABP4) (Bos taurus (Bovine)).